Here is a 181-residue protein sequence, read N- to C-terminus: ADP-ribosylation factor 1 (181 aa).

G2 is lipidated: N-myristoyl glycine. GTP is bound by residues 24–31, 67–71, and 126–129; these read GLDAAGKT, DVGGQ, and NKQD.

Belongs to the small GTPase superfamily. Arf family.

It is found in the golgi apparatus. It catalyses the reaction GTP + H2O = GDP + phosphate + H(+). Functionally, GTP-binding protein involved in protein trafficking; may modulate vesicle budding and uncoating within the Golgi apparatus. This Daucus carota (Wild carrot) protein is ADP-ribosylation factor 1 (ARF1).